A 277-amino-acid polypeptide reads, in one-letter code: Energy-coupling factor transporter ATP-binding protein EcfA1 (277 aa).

Residues 5–243 (IRAQNVSFCY…VEVLKKIGLD (239 aa)) enclose the ABC transporter domain. ATP is bound at residue 42 to 49 (GHNGSGKS).

It belongs to the ABC transporter superfamily. Energy-coupling factor EcfA family. Forms a stable energy-coupling factor (ECF) transporter complex composed of 2 membrane-embedded substrate-binding proteins (S component), 2 ATP-binding proteins (A component) and 2 transmembrane proteins (T component).

The protein resides in the cell membrane. Its function is as follows. ATP-binding (A) component of a common energy-coupling factor (ECF) ABC-transporter complex. Unlike classic ABC transporters this ECF transporter provides the energy necessary to transport a number of different substrates. The protein is Energy-coupling factor transporter ATP-binding protein EcfA1 of Caldanaerobacter subterraneus subsp. tengcongensis (strain DSM 15242 / JCM 11007 / NBRC 100824 / MB4) (Thermoanaerobacter tengcongensis).